Reading from the N-terminus, the 764-residue chain is 5-methyltetrahydropteroyltriglutamate--homocysteine methyltransferase (764 aa).

5-methyltetrahydropteroyltri-L-glutamate contacts are provided by residues arginine 16–lysine 19 and lysine 112. L-homocysteine contacts are provided by residues isoleucine 431–serine 433 and glutamate 484. L-methionine contacts are provided by residues isoleucine 431–serine 433 and glutamate 484. 5-methyltetrahydropteroyltri-L-glutamate is bound by residues arginine 515–cysteine 516 and tryptophan 561. Residue aspartate 599 coordinates L-homocysteine. Aspartate 599 lines the L-methionine pocket. Glutamate 605 provides a ligand contact to 5-methyltetrahydropteroyltri-L-glutamate. Residues histidine 641, cysteine 643, and glutamate 665 each coordinate Zn(2+). Histidine 694 functions as the Proton donor in the catalytic mechanism. Residue cysteine 726 participates in Zn(2+) binding.

Belongs to the vitamin-B12 independent methionine synthase family. The cofactor is Zn(2+).

The catalysed reaction is 5-methyltetrahydropteroyltri-L-glutamate + L-homocysteine = tetrahydropteroyltri-L-glutamate + L-methionine. It participates in amino-acid biosynthesis; L-methionine biosynthesis via de novo pathway; L-methionine from L-homocysteine (MetE route): step 1/1. Functionally, catalyzes the transfer of a methyl group from 5-methyltetrahydrofolate to homocysteine resulting in methionine formation. The polypeptide is 5-methyltetrahydropteroyltriglutamate--homocysteine methyltransferase (Paraburkholderia xenovorans (strain LB400)).